Here is a 114-residue protein sequence, read N- to C-terminus: T cell receptor beta variable 5-4 (114 aa).

The signal sequence occupies residues 1 to 21 (MGPGLLCWALLCLLGAGSVET). Residues 22 to 114 (GVTQSPTHLI…SALYLCASSL (93 aa)) enclose the Ig-like domain. Cysteines 42 and 110 form a disulfide. Asparagine 90 is a glycosylation site (N-linked (GlcNAc...) asparagine).

As to quaternary structure, alpha-beta TR is a heterodimer composed of an alpha and beta chain; disulfide-linked. The alpha-beta TR is associated with the transmembrane signaling CD3 coreceptor proteins to form the TR-CD3 (TcR or TCR). The assembly of alpha-beta TR heterodimers with CD3 occurs in the endoplasmic reticulum where a single alpha-beta TR heterodimer associates with one CD3D-CD3E heterodimer, one CD3G-CD3E heterodimer and one CD247 homodimer forming a stable octameric structure. CD3D-CD3E and CD3G-CD3E heterodimers preferentially associate with TR alpha and TR beta chains, respectively. The association of the CD247 homodimer is the last step of TcR assembly in the endoplasmic reticulum and is required for transport to the cell surface.

Its subcellular location is the cell membrane. In terms of biological role, v region of the variable domain of T cell receptor (TR) beta chain that participates in the antigen recognition. Alpha-beta T cell receptors are antigen specific receptors which are essential to the immune response and are present on the cell surface of T lymphocytes. Recognize peptide-major histocompatibility (MH) (pMH) complexes that are displayed by antigen presenting cells (APC), a prerequisite for efficient T cell adaptive immunity against pathogens. Binding of alpha-beta TR to pMH complex initiates TR-CD3 clustering on the cell surface and intracellular activation of LCK that phosphorylates the ITAM motifs of CD3G, CD3D, CD3E and CD247 enabling the recruitment of ZAP70. In turn ZAP70 phosphorylates LAT, which recruits numerous signaling molecules to form the LAT signalosome. The LAT signalosome propagates signal branching to three major signaling pathways, the calcium, the mitogen-activated protein kinase (MAPK) kinase and the nuclear factor NF-kappa-B (NF-kB) pathways, leading to the mobilization of transcription factors that are critical for gene expression and essential for T cell growth and differentiation. The T cell repertoire is generated in the thymus, by V-(D)-J rearrangement. This repertoire is then shaped by intrathymic selection events to generate a peripheral T cell pool of self-MH restricted, non-autoaggressive T cells. Post-thymic interaction of alpha-beta TR with the pMH complexes shapes TR structural and functional avidity. In Homo sapiens (Human), this protein is T cell receptor beta variable 5-4.